We begin with the raw amino-acid sequence, 740 residues long: Ribosome-releasing factor 2, mitochondrial (740 aa).

The N-terminal 29 residues, 1-29, are a transit peptide targeting the mitochondrion; the sequence is MLKYAWQSGPKQSNRWLWHLSNQIWKRSY. One can recognise a tr-type G domain in the interval 31–310; sequence SKIRNIGILA…AVNAYLPAPE (280 aa). Residues 40 to 47, 104 to 108, and 158 to 161 each bind GTP; these read AHIDAGKT, DTPGH, and NKMD.

It belongs to the TRAFAC class translation factor GTPase superfamily. Classic translation factor GTPase family. EF-G/EF-2 subfamily.

It is found in the mitochondrion. Its function is as follows. Mitochondrial GTPase that mediates the disassembly of ribosomes from messenger RNA at the termination of mitochondrial protein biosynthesis. Not involved in the GTP-dependent ribosomal translocation step during translation elongation. The protein is Ribosome-releasing factor 2, mitochondrial of Drosophila melanogaster (Fruit fly).